The primary structure comprises 100 residues: Small ribosomal subunit protein uS14c (100 aa).

The protein belongs to the universal ribosomal protein uS14 family. Part of the 30S ribosomal subunit.

The protein localises to the plastid. It localises to the chloroplast. Functionally, binds 16S rRNA, required for the assembly of 30S particles. This chain is Small ribosomal subunit protein uS14c, found in Nymphaea alba (White water-lily).